The chain runs to 428 residues: Tyrosine--tRNA ligase (428 aa).

Residue Tyr41 coordinates L-tyrosine. Positions Pro46–His55 match the 'HIGH' region motif. Residue Lys148 is modified to N6-acetyllysine. L-tyrosine is bound by residues Tyr179 and Gln183. The 'KMSKS' region motif lies at Lys239–Thr243. An ATP-binding site is contributed by Lys242. One can recognise an S4 RNA-binding domain in the interval Ala361–Gly418.

Belongs to the class-I aminoacyl-tRNA synthetase family. TyrS type 1 subfamily. In terms of assembly, homodimer.

It localises to the cytoplasm. The enzyme catalyses tRNA(Tyr) + L-tyrosine + ATP = L-tyrosyl-tRNA(Tyr) + AMP + diphosphate + H(+). Catalyzes the attachment of tyrosine to tRNA(Tyr) in a two-step reaction: tyrosine is first activated by ATP to form Tyr-AMP and then transferred to the acceptor end of tRNA(Tyr). The sequence is that of Tyrosine--tRNA ligase from Escherichia coli O1:K1 / APEC.